A 236-amino-acid chain; its full sequence is Proteasome subunit beta type-1 (236 aa).

It belongs to the peptidase T1B family. As to quaternary structure, the 26S proteasome consists of a 20S proteasome core and two 19S regulatory subunits. The 20S proteasome core is composed of 28 subunits that are arranged in four stacked rings, resulting in a barrel-shaped structure. The two end rings are each formed by seven alpha subunits, and the two central rings are each formed by seven beta subunits. The catalytic chamber with the active sites is on the inside of the barrel.

Its subcellular location is the cytoplasm. It is found in the nucleus. Its function is as follows. Non-catalytic component of the proteasome, a multicatalytic proteinase complex which is characterized by its ability to cleave peptides with Arg, Phe, Tyr, Leu, and Glu adjacent to the leaving group at neutral or slightly basic pH. The proteasome has an ATP-dependent proteolytic activity. This is Proteasome subunit beta type-1 (psmB1) from Dictyostelium discoideum (Social amoeba).